A 473-amino-acid chain; its full sequence is Glutamine synthetase (473 aa).

The region spanning 15–100 is the GS beta-grasp domain; sequence ENIKIIDLKF…ICSIKEPRTG (86 aa). One can recognise a GS catalytic domain in the interval 107–473; that stretch reads PRTIAAKAVE…PYEFSLYYDC (367 aa). Residue E132 participates in Mn(2+) binding. A Mg(2+)-binding site is contributed by E134. E210 provides a ligand contact to ATP. E215 and E223 together coordinate Mg(2+). L-glutamate is bound by residues 267–268 and G268; that span reads NG. Residue H272 coordinates Mg(2+). Residues 274–276 and S276 each bind ATP; that span reads HQS. 3 residues coordinate L-glutamate: R324, E330, and R342. The ATP site is built by R342, R347, and K356. A Mn(2+)-binding site is contributed by E361. R363 is a binding site for L-glutamate. Y401 bears the O-AMP-tyrosine mark.

It belongs to the glutamine synthetase family. Oligomer of 12 subunits arranged in the form of two hexagons. It depends on Mg(2+) as a cofactor.

It localises to the cytoplasm. The enzyme catalyses L-glutamate + NH4(+) + ATP = L-glutamine + ADP + phosphate + H(+). With respect to regulation, inhibited by ADP (90%), AMP (80%), alanine (52%) and aspartate (41%). The activity of this enzyme could be controlled by adenylation under conditions of abundant glutamine. Functionally, involved in nitrogen metabolism via ammonium assimilation. Catalyzes the ATP-dependent biosynthesis of glutamine from glutamate and ammonia. The polypeptide is Glutamine synthetase (Synechocystis sp. (strain ATCC 27184 / PCC 6803 / Kazusa)).